We begin with the raw amino-acid sequence, 65 residues long: Small ribosomal subunit protein eS31 (65 aa).

Residues cysteine 36, cysteine 39, cysteine 55, and cysteine 58 each coordinate Zn(2+). The C4-type zinc finger occupies 36–58; sequence CPKCGSVMAFHKEPVPRWHCGKC.

This sequence belongs to the eukaryotic ribosomal protein eS31 family. As to quaternary structure, part of the 30S ribosomal subunit. Zn(2+) is required as a cofactor.

The polypeptide is Small ribosomal subunit protein eS31 (Pyrobaculum aerophilum (strain ATCC 51768 / DSM 7523 / JCM 9630 / CIP 104966 / NBRC 100827 / IM2)).